We begin with the raw amino-acid sequence, 110 residues long: Inner kinetochore subunit mhf1 (110 aa).

Belongs to the TAF9 family. CENP-S/MHF1 subfamily. As to quaternary structure, the MHF histone-fold complex is a heterotetramer of 2 mhf1-mhf2 heterodimers. Component of the inner kinetochore constitutive centromere-associated network (CCAN) (also known as central kinetochore Sim4 complex in fission yeast), which is composed of at least cnl2, cnp3, cnp20, fta1, fta2, fta3, fta4, fta6, fta7, mal2, mhf1, mhf2, mis6, mis15, mis17, sim4 and wip1.

The protein resides in the nucleus. Its function is as follows. Component of a FANCM-MHF complex that promotes gene conversion at blocked replication forks, probably by reversal of the stalled fork. FANCM-MHF promotes non-crossover recombination. This chain is Inner kinetochore subunit mhf1, found in Schizosaccharomyces pombe (strain 972 / ATCC 24843) (Fission yeast).